A 124-amino-acid chain; its full sequence is Fluoride-specific ion channel FluC (124 aa).

Helical transmembrane passes span 1-21 (MAYL…HFIN), 36-56 (TFFI…YLAF), 66-86 (LFLM…SLDA), and 94-114 (AVGL…AGLF). 2 residues coordinate Na(+): Gly74 and Thr77.

Belongs to the fluoride channel Fluc/FEX (TC 1.A.43) family.

Its subcellular location is the cell inner membrane. The enzyme catalyses fluoride(in) = fluoride(out). With respect to regulation, na(+) is not transported, but it plays an essential structural role and its presence is essential for fluoride channel function. Its function is as follows. Fluoride-specific ion channel. Important for reducing fluoride concentration in the cell, thus reducing its toxicity. This chain is Fluoride-specific ion channel FluC, found in Rhodopseudomonas palustris (strain ATCC BAA-98 / CGA009).